The primary structure comprises 202 residues: LexA repressor (202 aa).

A DNA-binding region (H-T-H motif) is located at residues 28-48 (RAEIAQRLGFRSPNAAEEHLK). Catalysis depends on for autocatalytic cleavage activity residues Ser-119 and Lys-156.

This sequence belongs to the peptidase S24 family. As to quaternary structure, homodimer.

It catalyses the reaction Hydrolysis of Ala-|-Gly bond in repressor LexA.. Represses a number of genes involved in the response to DNA damage (SOS response), including recA and lexA. Binds to the 16 bp palindromic sequence 5'-CTGTATATATATACAG-3'. In the presence of single-stranded DNA, RecA interacts with LexA causing an autocatalytic cleavage which disrupts the DNA-binding part of LexA, leading to derepression of the SOS regulon and eventually DNA repair. This chain is LexA repressor, found in Klebsiella pneumoniae (strain 342).